We begin with the raw amino-acid sequence, 329 residues long: 4-hydroxy-3-methylbut-2-enyl diphosphate reductase (329 aa).

[4Fe-4S] cluster is bound at residue Cys27. 2 residues coordinate (2E)-4-hydroxy-3-methylbut-2-enyl diphosphate: His56 and His89. Residues His56 and His89 each contribute to the dimethylallyl diphosphate site. Isopentenyl diphosphate contacts are provided by His56 and His89. Cys111 contributes to the [4Fe-4S] cluster binding site. His139 contacts (2E)-4-hydroxy-3-methylbut-2-enyl diphosphate. His139 provides a ligand contact to dimethylallyl diphosphate. Residue His139 coordinates isopentenyl diphosphate. Residue Glu141 is the Proton donor of the active site. A (2E)-4-hydroxy-3-methylbut-2-enyl diphosphate-binding site is contributed by Thr179. Cys209 lines the [4Fe-4S] cluster pocket. (2E)-4-hydroxy-3-methylbut-2-enyl diphosphate-binding residues include Ser237, Ser238, Asn239, and Ser281. Dimethylallyl diphosphate is bound by residues Ser237, Ser238, Asn239, and Ser281. Isopentenyl diphosphate contacts are provided by Ser237, Ser238, Asn239, and Ser281.

The protein belongs to the IspH family. [4Fe-4S] cluster is required as a cofactor.

The catalysed reaction is isopentenyl diphosphate + 2 oxidized [2Fe-2S]-[ferredoxin] + H2O = (2E)-4-hydroxy-3-methylbut-2-enyl diphosphate + 2 reduced [2Fe-2S]-[ferredoxin] + 2 H(+). The enzyme catalyses dimethylallyl diphosphate + 2 oxidized [2Fe-2S]-[ferredoxin] + H2O = (2E)-4-hydroxy-3-methylbut-2-enyl diphosphate + 2 reduced [2Fe-2S]-[ferredoxin] + 2 H(+). Its pathway is isoprenoid biosynthesis; dimethylallyl diphosphate biosynthesis; dimethylallyl diphosphate from (2E)-4-hydroxy-3-methylbutenyl diphosphate: step 1/1. It functions in the pathway isoprenoid biosynthesis; isopentenyl diphosphate biosynthesis via DXP pathway; isopentenyl diphosphate from 1-deoxy-D-xylulose 5-phosphate: step 6/6. Catalyzes the conversion of 1-hydroxy-2-methyl-2-(E)-butenyl 4-diphosphate (HMBPP) into a mixture of isopentenyl diphosphate (IPP) and dimethylallyl diphosphate (DMAPP). Acts in the terminal step of the DOXP/MEP pathway for isoprenoid precursor biosynthesis. This chain is 4-hydroxy-3-methylbut-2-enyl diphosphate reductase, found in Methylibium petroleiphilum (strain ATCC BAA-1232 / LMG 22953 / PM1).